The following is a 170-amino-acid chain: Alpha-crystallin A chain (170 aa).

At Met-1 the chain carries N-acetylmethionine. The segment at 1–63 is required for complex formation with BFSP1 and BFSP2; it reads MDVTIQQPWF…RTALDSGISE (63 aa). Residue Gln-6 is modified to Deamidated glutamine; partial. Ser-45 carries the post-translational modification Phosphoserine. Gln-50 carries the post-translational modification Deamidated glutamine; partial. The sHSP domain occupies 52–161; the sequence is LFRTALDSGI…SERPIPVSRE (110 aa). Lys-70 and Lys-99 each carry N6-acetyllysine. Residue His-100 participates in Zn(2+) binding. The residue at position 101 (Asn-101) is a Deamidated asparagine; partial. Zn(2+)-binding residues include Glu-102, His-107, and His-151. Residues 144–170 form a disordered region; it reads PKIVDPSHSERPIPVSREEKPSSAPSS. Positions 148–164 are enriched in basic and acidic residues; that stretch reads DPSHSERPIPVSREEKP. A glycan (O-linked (GlcNAc) serine) is linked at Ser-159.

This sequence belongs to the small heat shock protein (HSP20) family. Heteromer composed of three CRYAA and one CRYAB subunits. Inter-subunit bridging via zinc ions enhances stability, which is crucial as there is no protein turn over in the lens. Can also form homodimers and homotetramers (dimers of dimers) which serve as the building blocks of homooligomers. Within homooligomers, the zinc-binding motif is created from residues of 3 different molecules. His-100 and Glu-102 from one molecule are ligands of the zinc ion, and His-107 and His-151 residues from additional molecules complete the site with tetrahedral coordination geometry. Part of a complex required for lens intermediate filament formation composed of BFSP1, BFSP2 and CRYAA. In terms of processing, acetylation at Lys-70 may increase chaperone activity. Post-translationally, undergoes age-dependent proteolytical cleavage at the C-terminus.

Its subcellular location is the cytoplasm. It localises to the nucleus. Contributes to the transparency and refractive index of the lens. Acts as a chaperone, preventing aggregation of various proteins under a wide range of stress conditions. Required for the correct formation of lens intermediate filaments as part of a complex composed of BFSP1, BFSP2 and CRYAA. The polypeptide is Alpha-crystallin A chain (CRYAA) (Bradypus variegatus (Brown-throated three-fingered sloth)).